Here is a 60-residue protein sequence, read N- to C-terminus: Small integral membrane protein 3 (60 aa).

The helical transmembrane segment at 20-40 (IWVIVLIILATIVIMTSLLLC) threads the bilayer.

It localises to the membrane. The protein is Small integral membrane protein 3 (SMIM3) of Homo sapiens (Human).